The following is a 283-amino-acid chain: Arylamine N-acetyltransferase (283 aa).

Cys70 serves as the catalytic Acyl-thioester intermediate. Catalysis depends on residues His110 and Asp127.

It belongs to the arylamine N-acetyltransferase family. Homodimer and homotetramer.

It carries out the reaction an arylamine + acetyl-CoA = an N-acetylarylamine + CoA. Its function is as follows. Catalyzes the transfer of the acetyl group from acetyl coenzyme A to the free amino group of arylamines and hydrazines. Is able to utilize not only acetyl-CoA, but also n-propionyl-CoA and acetoacetyl-CoA as acyl donors, although at a lower rate. As acetyl-CoA and propionyl-CoA are products of cholesterol catabolism and the nat gene is likely present in the same operon than genes involved in cholesterol degradation, this enzyme could have a role in the utilization and regulation of these CoA species. In Mycobacterium bovis (strain ATCC BAA-935 / AF2122/97), this protein is Arylamine N-acetyltransferase (nat).